The chain runs to 178 residues: Small ribosomal subunit protein uS5 (178 aa).

An S5 DRBM domain is found at 13-76 (LEERVVQINR…EAAKRNLIRV (64 aa)). The tract at residues 156 to 178 (ASRRDMTPQELMERRTRRETEAA) is disordered.

The protein belongs to the universal ribosomal protein uS5 family. In terms of assembly, part of the 30S ribosomal subunit. Contacts proteins S4 and S8.

With S4 and S12 plays an important role in translational accuracy. Functionally, located at the back of the 30S subunit body where it stabilizes the conformation of the head with respect to the body. This is Small ribosomal subunit protein uS5 from Chloroflexus aurantiacus (strain ATCC 29364 / DSM 637 / Y-400-fl).